The chain runs to 179 residues: Acireductone dioxygenase (179 aa).

Residues M7–V26 form a disordered region. Residues H88, H90, E94, and H133 each contribute to the Fe(2+) site. Positions 88, 90, 94, and 133 each coordinate Ni(2+).

This sequence belongs to the acireductone dioxygenase (ARD) family. As to quaternary structure, monomer. Interacts with MMP14. It depends on Fe(2+) as a cofactor. Requires Ni(2+) as cofactor. Detected in heart, colon, lung, stomach, brain, spleen, liver, skeletal muscle and kidney.

The protein localises to the cytoplasm. It localises to the nucleus. Its subcellular location is the cell membrane. The enzyme catalyses 1,2-dihydroxy-5-(methylsulfanyl)pent-1-en-3-one + O2 = 4-methylsulfanyl-2-oxobutanoate + formate + 2 H(+). It carries out the reaction 1,2-dihydroxy-5-(methylsulfanyl)pent-1-en-3-one + O2 = 3-(methylsulfanyl)propanoate + CO + formate + 2 H(+). The protein operates within amino-acid biosynthesis; L-methionine biosynthesis via salvage pathway; L-methionine from S-methyl-5-thio-alpha-D-ribose 1-phosphate: step 5/6. Its function is as follows. Catalyzes 2 different reactions between oxygen and the acireductone 1,2-dihydroxy-3-keto-5-methylthiopentene (DHK-MTPene) depending upon the metal bound in the active site. Fe-containing acireductone dioxygenase (Fe-ARD) produces formate and 2-keto-4-methylthiobutyrate (KMTB), the alpha-ketoacid precursor of methionine in the methionine recycle pathway. Ni-containing acireductone dioxygenase (Ni-ARD) produces methylthiopropionate, carbon monoxide and formate, and does not lie on the methionine recycle pathway. Also down-regulates cell migration mediated by MMP14. Necessary for hepatitis C virus replication in an otherwise non-permissive cell line. The chain is Acireductone dioxygenase from Homo sapiens (Human).